Reading from the N-terminus, the 329-residue chain is Delta(7)-sterol 5(6)-desaturase erg32 (329 aa).

2 helical membrane-spanning segments follow: residues 67 to 87 (LFLI…SFAY) and 149 to 169 (FYLF…IYWI). A Fatty acid hydroxylase domain is found at 156 to 281 (ALFLLFSDFL…FFTLFDRLCS (126 aa)). The Histidine box-1 motif lies at 170-175 (HRALHH). Positions 183-187 (HKLHH) match the Histidine box-2 motif. A helical membrane pass occupies residues 210 to 230 (LPYHMFPFFFPLNKYVYLLLF). A Histidine box-3 motif is present at residues 257–262 (HHAAHH).

It belongs to the sterol desaturase family. Requires Fe cation as cofactor.

It is found in the endoplasmic reticulum membrane. Its subcellular location is the golgi apparatus membrane. The catalysed reaction is episterol + 2 Fe(II)-[cytochrome b5] + O2 + 2 H(+) = 5-dehydroepisterol + 2 Fe(III)-[cytochrome b5] + 2 H2O. Its pathway is steroid metabolism; ergosterol biosynthesis. Functionally, C-5 sterol desaturase; part of the third module of ergosterol biosynthesis pathway that includes by the late steps of the pathway. Erg31 and erg32 catalyze the introduction of a C-5 double bond in the B ring to produce 5-dehydroepisterol. The third module or late pathway involves the ergosterol synthesis itself through consecutive reactions that mainly occur in the endoplasmic reticulum (ER) membrane. Firstly, the squalene synthase erg9 catalyzes the condensation of 2 farnesyl pyrophosphate moieties to form squalene, which is the precursor of all steroids. Secondly, squalene is converted into lanosterol by the consecutive action of the squalene epoxidase erg1 and the lanosterol synthase erg7. The lanosterol 14-alpha-demethylase erg11/cyp1 catalyzes C14-demethylation of lanosterol to produce 4,4'-dimethyl cholesta-8,14,24-triene-3-beta-ol. In the next steps, a complex process involving various demethylation, reduction and desaturation reactions catalyzed by the C-14 reductase erg24 and the C-4 demethylation complex erg25-erg26-erg27 leads to the production of zymosterol. Erg28 likely functions in the C-4 demethylation complex reaction by tethering erg26 and Erg27 to the endoplasmic reticulum or to facilitate interaction between these proteins. Then, the sterol 24-C-methyltransferase erg6 catalyzes the methyl transfer from S-adenosyl-methionine to the C-24 of zymosterol to form fecosterol. The C-8 sterol isomerase erg2 catalyzes the reaction which results in unsaturation at C-7 in the B ring of sterols and thus converts fecosterol to episterol. The sterol-C5-desaturases erg31 and erg32 then catalyze the introduction of a C-5 double bond in the B ring to produce 5-dehydroepisterol. The C-22 sterol desaturase erg5 further converts 5-dehydroepisterol into ergosta-5,7,22,24(28)-tetraen-3beta-ol by forming the C-22(23) double bond in the sterol side chain. Finally, ergosta-5,7,22,24(28)-tetraen-3beta-ol is substrate of the C-24(28) sterol reductase erg4 to produce ergosterol. In the genus Schizosaccharomyces, a second route exists between lanosterol and fecosterol, via the methylation of lanosterol to eburicol by erg6, followed by C14-demethylation by erg11/cyp1 and C4-demethylation by the demethylation complex erg25-erg26-erg27. The protein is Delta(7)-sterol 5(6)-desaturase erg32 of Schizosaccharomyces pombe (strain 972 / ATCC 24843) (Fission yeast).